The following is a 104-amino-acid chain: DET1- and DDB1-associated protein 1 (104 aa).

Residues Lys67–Glu77 are compositionally biased toward basic and acidic residues. The interval Lys67–Ser104 is disordered.

This sequence belongs to the DDA1 family. As to quaternary structure, component of numerous DCX (DDB1-CUL4-X-box) E3 ubiquitin-protein ligase complexes which consist of a core of DDB1, cullin-4 (CUL4A or CUL4B), DDA1 and RBX1.

Its pathway is protein modification; protein ubiquitination. Functions as a component of numerous distinct DCX (DDB1-CUL4-X-box) E3 ubiquitin-protein ligase complexes which mediate the ubiquitination and subsequent proteasomal degradation of target proteins. In the DCX complexes, acts as a scaffolding subunit required to stabilize the complex. The polypeptide is DET1- and DDB1-associated protein 1 (Danio rerio (Zebrafish)).